Consider the following 38-residue polypeptide: Photosystem II reaction center protein X (38 aa).

A helical membrane pass occupies residues 9–29 (IASLFAGAFIALAIGGVLVFI).

The protein belongs to the PsbX family. Type 1 subfamily. In terms of assembly, PSII is composed of 1 copy each of membrane proteins PsbA, PsbB, PsbC, PsbD, PsbE, PsbF, PsbH, PsbI, PsbJ, PsbK, PsbL, PsbM, PsbT, PsbX, PsbY, PsbZ, Psb30/Ycf12, at least 3 peripheral proteins of the oxygen-evolving complex and a large number of cofactors. It forms dimeric complexes.

It is found in the plastid. Its subcellular location is the chloroplast thylakoid membrane. Its function is as follows. Involved in the binding and/or turnover of quinones at the Q(B) site of photosystem II (PSII). PSII is a light-driven water plastoquinone oxidoreductase, using light energy to abstract electrons from H(2)O, generating a proton gradient subsequently used for ATP formation. This chain is Photosystem II reaction center protein X, found in Phaeodactylum tricornutum (strain CCAP 1055/1).